Reading from the N-terminus, the 238-residue chain is Alpha-tubulin N-acetyltransferase (238 aa).

Positions 1–196 (MEFDFDISQS…NNFVVFEDLF (196 aa)) constitute an N-acetyltransferase domain. Acetyl-CoA is bound by residues 129-142 (FYVH…GNGK) and 165-174 (SFKFLSFLQK).

Belongs to the acetyltransferase ATAT1 family.

It catalyses the reaction L-lysyl-[alpha-tubulin] + acetyl-CoA = N(6)-acetyl-L-lysyl-[alpha-tubulin] + CoA + H(+). Specifically acetylates 'Lys-40' in alpha-tubulin on the lumenal side of microtubules. Promotes microtubule destabilization and accelerates microtubule dynamics; this activity may be independent of acetylation activity. Acetylates alpha-tubulin with a slow enzymatic rate, due to a catalytic site that is not optimized for acetyl transfer. Enters the microtubule through each end and diffuses quickly throughout the lumen of microtubules. Acetylates only long/old microtubules because of its slow acetylation rate since it does not have time to act on dynamically unstable microtubules before the enzyme is released. The sequence is that of Alpha-tubulin N-acetyltransferase from Trichoplax adhaerens (Trichoplax reptans).